Reading from the N-terminus, the 88-residue chain is MLNTTFDQVMEFPNSCPFKVIGDADDTLADRVVAVAQQLAPGDYVPSVKASSKGSYYSVTIRITVTSKEHIEKAYIDLAAIEGVKRVL.

This sequence belongs to the UPF0250 family.

The protein is UPF0250 protein Sfri_0694 of Shewanella frigidimarina (strain NCIMB 400).